We begin with the raw amino-acid sequence, 799 residues long: ATP-dependent DNA helicase Hel308 (799 aa).

ATP-binding positions include Gln29 and 47–54 (IPTASGKT). The 167-residue stretch at 34 to 200 (EAGVTEGENL…WLDAGLVDSD (167 aa)) folds into the Helicase ATP-binding domain. A DEAH box motif is present at residues 145-148 (DEVH). A Helicase C-terminal domain is found at 234–435 (QTAAIVRDTL…EPALRTHILA (202 aa)). Disordered stretches follow at residues 522–566 (RGAS…DRDP) and 750–799 (NVLE…LGDF). Positions 553 to 566 (LAEDADESDADRDP) are enriched in acidic residues.

It belongs to the helicase family. Hel308 subfamily. As to quaternary structure, monomer.

It catalyses the reaction Couples ATP hydrolysis with the unwinding of duplex DNA by translocating in the 3'-5' direction.. It carries out the reaction ATP + H2O = ADP + phosphate + H(+). In terms of biological role, DNA-dependent ATPase and 3'-5' DNA helicase that may be involved in repair of stalled replication forks. The protein is ATP-dependent DNA helicase Hel308 of Haloarcula marismortui (strain ATCC 43049 / DSM 3752 / JCM 8966 / VKM B-1809) (Halobacterium marismortui).